A 364-amino-acid polypeptide reads, in one-letter code: DNA replication and repair protein RecF (364 aa).

30–37 (GRNAQGKT) lines the ATP pocket.

Belongs to the RecF family.

The protein resides in the cytoplasm. The RecF protein is involved in DNA metabolism; it is required for DNA replication and normal SOS inducibility. RecF binds preferentially to single-stranded, linear DNA. It also seems to bind ATP. This chain is DNA replication and repair protein RecF, found in Pelotomaculum thermopropionicum (strain DSM 13744 / JCM 10971 / SI).